Reading from the N-terminus, the 130-residue chain is MADLIFPIAPGAALAIHVALSAGIVAAIIVVATIIREKRAGARPDVPYESGILPGTPPQGPQNAPYFLIAALFVIFDMEAAILFAWAVAARDAGWVGLIEAAIFIGVLLLALIYLWVDGALDWGGPRQRK.

Helical transmembrane passes span 15-35 (AIHV…ATII), 67-87 (FLIA…FAWA), and 95-115 (WVGL…LIYL).

It belongs to the complex I subunit 3 family. In terms of assembly, NDH-1 is composed of 14 different subunits. Subunits NuoA, H, J, K, L, M, N constitute the membrane sector of the complex.

It localises to the cell inner membrane. The enzyme catalyses a quinone + NADH + 5 H(+)(in) = a quinol + NAD(+) + 4 H(+)(out). Functionally, NDH-1 shuttles electrons from NADH, via FMN and iron-sulfur (Fe-S) centers, to quinones in the respiratory chain. The immediate electron acceptor for the enzyme in this species is believed to be ubiquinone. Couples the redox reaction to proton translocation (for every two electrons transferred, four hydrogen ions are translocated across the cytoplasmic membrane), and thus conserves the redox energy in a proton gradient. This chain is NADH-quinone oxidoreductase subunit A, found in Rhodopseudomonas palustris (strain BisA53).